The sequence spans 320 residues: Malate dehydrogenase (320 aa).

Residues 10–15 (GAGQIG) and D34 each bind NAD(+). R83 and R89 together coordinate substrate. NAD(+)-binding positions include N96 and 119–121 (ITN). Substrate is bound by residues N121 and R152. The active-site Proton acceptor is H176.

The protein belongs to the LDH/MDH superfamily. MDH type 3 family.

It carries out the reaction (S)-malate + NAD(+) = oxaloacetate + NADH + H(+). Functionally, catalyzes the reversible oxidation of malate to oxaloacetate. The chain is Malate dehydrogenase from Methylobacterium radiotolerans (strain ATCC 27329 / DSM 1819 / JCM 2831 / NBRC 15690 / NCIMB 10815 / 0-1).